Reading from the N-terminus, the 143-residue chain is Nucleoside diphosphate kinase (143 aa).

6 residues coordinate ATP: Lys-11, Phe-59, Arg-87, Thr-93, Arg-104, and Asn-114. Residue His-117 is the Pros-phosphohistidine intermediate of the active site.

The protein belongs to the NDK family. As to quaternary structure, homotetramer. Requires Mg(2+) as cofactor.

It is found in the cytoplasm. The enzyme catalyses a 2'-deoxyribonucleoside 5'-diphosphate + ATP = a 2'-deoxyribonucleoside 5'-triphosphate + ADP. The catalysed reaction is a ribonucleoside 5'-diphosphate + ATP = a ribonucleoside 5'-triphosphate + ADP. Its function is as follows. Major role in the synthesis of nucleoside triphosphates other than ATP. The ATP gamma phosphate is transferred to the NDP beta phosphate via a ping-pong mechanism, using a phosphorylated active-site intermediate. The polypeptide is Nucleoside diphosphate kinase (Shewanella woodyi (strain ATCC 51908 / MS32)).